Consider the following 244-residue polypeptide: Pyridoxine 5'-phosphate synthase (244 aa).

Asn-7 contributes to the 3-amino-2-oxopropyl phosphate binding site. Residue 9-10 coordinates 1-deoxy-D-xylulose 5-phosphate; the sequence is DH. Arg-18 provides a ligand contact to 3-amino-2-oxopropyl phosphate. His-43 (proton acceptor) is an active-site residue. Arg-45 and His-50 together coordinate 1-deoxy-D-xylulose 5-phosphate. Glu-70 acts as the Proton acceptor in catalysis. Thr-100 contacts 1-deoxy-D-xylulose 5-phosphate. Residue His-191 is the Proton donor of the active site. Residues Gly-192 and 213–214 each bind 3-amino-2-oxopropyl phosphate; that span reads GH.

The protein belongs to the PNP synthase family. As to quaternary structure, homooctamer; tetramer of dimers.

It localises to the cytoplasm. It carries out the reaction 3-amino-2-oxopropyl phosphate + 1-deoxy-D-xylulose 5-phosphate = pyridoxine 5'-phosphate + phosphate + 2 H2O + H(+). The protein operates within cofactor biosynthesis; pyridoxine 5'-phosphate biosynthesis; pyridoxine 5'-phosphate from D-erythrose 4-phosphate: step 5/5. Functionally, catalyzes the complicated ring closure reaction between the two acyclic compounds 1-deoxy-D-xylulose-5-phosphate (DXP) and 3-amino-2-oxopropyl phosphate (1-amino-acetone-3-phosphate or AAP) to form pyridoxine 5'-phosphate (PNP) and inorganic phosphate. In Laribacter hongkongensis (strain HLHK9), this protein is Pyridoxine 5'-phosphate synthase.